A 206-amino-acid polypeptide reads, in one-letter code: Cytochrome c oxidase assembly protein CtaG (206 aa).

Residues 1–17 lie on the Cytoplasmic side of the membrane; it reads MPEVQPSALPKPAPRLG. The chain crosses the membrane as a helical; Signal-anchor for type II membrane protein span at residues 18–40; the sequence is RDAAVASICGFVVALMVGASFAA. The Periplasmic segment spans residues 41–206; the sequence is VPFYDWFCRT…GEPDQRKGNL (166 aa).

This sequence belongs to the COX11/CtaG family.

It localises to the cell inner membrane. In terms of biological role, exerts its effect at some terminal stage of cytochrome c oxidase synthesis, probably by being involved in the insertion of the copper B into subunit I. In Rhodopseudomonas palustris (strain BisB5), this protein is Cytochrome c oxidase assembly protein CtaG.